Reading from the N-terminus, the 184-residue chain is Ras-related protein Rap1 (184 aa).

Residue 10–17 (GSGGVGKS) participates in GTP binding. Positions 32–40 (YDPTIEDSY) match the Effector region motif. Residues 57–61 (DTAGT) and 116–119 (NKCD) each bind GTP. At Cys181 the chain carries Cysteine methyl ester. Cys181 carries the S-geranylgeranyl cysteine lipid modification. A propeptide spans 182–184 (VLL) (removed in mature form).

This sequence belongs to the small GTPase superfamily. Ras family.

It is found in the cell membrane. It carries out the reaction GTP + H2O = GDP + phosphate + H(+). Alternates between an inactive form bound to GDP and an active form bound to GTP. Activated by a guanine nucleotide-exchange factor (GEF) and inactivated by a GTPase-activating protein (GAP). In terms of biological role, ras proteins bind GDP/GTP and possess intrinsic GTPase activity. Plays a role in photoreceptor cell determination. This chain is Ras-related protein Rap1, found in Drosophila melanogaster (Fruit fly).